The following is a 237-amino-acid chain: Class B acid phosphatase (237 aa).

Residues Met-1–Ala-23 form the signal peptide. Asp-69 serves as the catalytic Nucleophile. Residues Asp-69 and Asp-71 each contribute to the Mg(2+) site. The active-site Proton donor is the Asp-71. Substrate contacts are provided by residues Thr-137–Gly-138 and Lys-177. Residue Asp-192 participates in Mg(2+) binding.

Belongs to the class B bacterial acid phosphatase family. Homotetramer. The cofactor is Mg(2+).

Its subcellular location is the periplasm. It carries out the reaction a phosphate monoester + H2O = an alcohol + phosphate. In terms of biological role, dephosphorylates several organic phosphate monoesters. Also has a phosphotransferase activity catalyzing the transfer of low-energy phosphate groups from organic phosphate monoesters to free hydroxyl groups of various organic compounds. The chain is Class B acid phosphatase from Salmonella arizonae (strain ATCC BAA-731 / CDC346-86 / RSK2980).